The following is a 128-amino-acid chain: Large ribosomal subunit protein bL21 (128 aa).

The disordered stretch occupies residues 104-128 (GKKPSVGPRPKRVKAEPAPAADAAE). Residues 119-128 (EPAPAADAAE) show a composition bias toward low complexity.

The protein belongs to the bacterial ribosomal protein bL21 family. In terms of assembly, part of the 50S ribosomal subunit. Contacts protein L20.

Its function is as follows. This protein binds to 23S rRNA in the presence of protein L20. This is Large ribosomal subunit protein bL21 from Rhodopseudomonas palustris (strain BisB5).